We begin with the raw amino-acid sequence, 86 residues long: Triple QxxK/R motif-containing protein (86 aa).

The chain crosses the membrane as a helical span at residues 51 to 71; the sequence is VGLVLAAILALLLAFYAFFYL.

This sequence belongs to the TRIQK family.

Its subcellular location is the endoplasmic reticulum membrane. Functionally, may play a role in cell growth and maintenance of cell morphology. The polypeptide is Triple QxxK/R motif-containing protein (TRIQK) (Homo sapiens (Human)).